Here is a 102-residue protein sequence, read N- to C-terminus: Small ribosomal subunit protein uS10 (102 aa).

It belongs to the universal ribosomal protein uS10 family. In terms of assembly, part of the 30S ribosomal subunit.

Functionally, involved in the binding of tRNA to the ribosomes. The protein is Small ribosomal subunit protein uS10 of Moorella thermoacetica (strain ATCC 39073 / JCM 9320).